The following is a 539-amino-acid chain: CTP synthase (539 aa).

Residues 1–268 (MADTKYIFVT…DETVLRKVGL (268 aa)) form an amidoligase domain region. A CTP-binding site is contributed by Ser15. UTP is bound at residue Ser15. 16 to 21 (SLGKGI) is a binding site for ATP. Tyr56 is an L-glutamine binding site. Asp73 lines the ATP pocket. Mg(2+) is bound by residues Asp73 and Glu143. CTP is bound by residues 150 to 152 (DIE), 189 to 194 (KTKPTQ), and Lys225. UTP is bound by residues 189–194 (KTKPTQ) and Lys225. One can recognise a Glutamine amidotransferase type-1 domain in the interval 294-536 (TIALVGKYVE…IREAIKTRKK (243 aa)). Gly356 serves as a coordination point for L-glutamine. Cys383 acts as the Nucleophile; for glutamine hydrolysis in catalysis. Residues 384-387 (LGMQ), Glu407, and Arg464 contribute to the L-glutamine site. Active-site residues include His509 and Glu511.

This sequence belongs to the CTP synthase family. In terms of assembly, homotetramer.

The catalysed reaction is UTP + L-glutamine + ATP + H2O = CTP + L-glutamate + ADP + phosphate + 2 H(+). It catalyses the reaction L-glutamine + H2O = L-glutamate + NH4(+). The enzyme catalyses UTP + NH4(+) + ATP = CTP + ADP + phosphate + 2 H(+). It participates in pyrimidine metabolism; CTP biosynthesis via de novo pathway; CTP from UDP: step 2/2. Allosterically activated by GTP, when glutamine is the substrate; GTP has no effect on the reaction when ammonia is the substrate. The allosteric effector GTP functions by stabilizing the protein conformation that binds the tetrahedral intermediate(s) formed during glutamine hydrolysis. Inhibited by the product CTP, via allosteric rather than competitive inhibition. Functionally, catalyzes the ATP-dependent amination of UTP to CTP with either L-glutamine or ammonia as the source of nitrogen. Regulates intracellular CTP levels through interactions with the four ribonucleotide triphosphates. In Porphyromonas gingivalis (strain ATCC BAA-308 / W83), this protein is CTP synthase.